A 295-amino-acid polypeptide reads, in one-letter code: CCAAT-binding factor complex subunit php4 (295 aa).

Positions 1–19 (MESSKSPSEVEKSSSASPA) are enriched in low complexity. The segment at 1–69 (MESSKSPSEV…GPTSALSVEE (69 aa)) is disordered. Residues 73–111 (RVREKQYQDTIGKLQKENNELLEQLEMLQAQLKNSTLDS) adopt a coiled-coil conformation. The short motif at 93-100 (LLEQLEML) is the Nuclear export signal element. The disordered stretch occupies residues 108 to 130 (TLDSPKEVEVNSEVVKPDSATTE).

Component of tha CCAAT-binding complex composed of at least php2, php3, php4 and php5. Interacts with crm1 and grx4.

It is found in the cytoplasm. It localises to the nucleus. Its subcellular location is the cytoskeleton. The protein resides in the spindle pole. Functionally, component of the transcription regulatory CCAAT-binding complex. Required for the reprogramming of the cell for iron use. Down-regulates pcl1, sdh4, and isa1 underlow-iron conditions. This is CCAAT-binding factor complex subunit php4 (php4) from Schizosaccharomyces pombe (strain 972 / ATCC 24843) (Fission yeast).